The following is a 202-amino-acid chain: Glycerol-3-phosphate acyltransferase (202 aa).

4 consecutive transmembrane segments (helical) span residues 2–22, 80–100, 119–139, and 158–178; these read ANLL…AVVV, LNET…LFPV, AIDP…AFFF, and VLMN…VLLI.

It belongs to the PlsY family. Probably interacts with PlsX.

The protein resides in the cell inner membrane. The catalysed reaction is an acyl phosphate + sn-glycerol 3-phosphate = a 1-acyl-sn-glycero-3-phosphate + phosphate. It functions in the pathway lipid metabolism; phospholipid metabolism. Its function is as follows. Catalyzes the transfer of an acyl group from acyl-phosphate (acyl-PO(4)) to glycerol-3-phosphate (G3P) to form lysophosphatidic acid (LPA). This enzyme utilizes acyl-phosphate as fatty acyl donor, but not acyl-CoA or acyl-ACP. This is Glycerol-3-phosphate acyltransferase from Cupriavidus necator (strain ATCC 17699 / DSM 428 / KCTC 22496 / NCIMB 10442 / H16 / Stanier 337) (Ralstonia eutropha).